A 395-amino-acid chain; its full sequence is Acetate kinase (395 aa).

N8 contributes to the Mg(2+) binding site. An ATP-binding site is contributed by K15. Residue R89 coordinates substrate. Residue D146 is the Proton donor/acceptor of the active site. ATP is bound by residues 206–210, 281–283, and 329–333; these read HLGNG, DLR, and GIGEN. E382 is a binding site for Mg(2+).

It belongs to the acetokinase family. In terms of assembly, homodimer. It depends on Mg(2+) as a cofactor. Mn(2+) is required as a cofactor.

The protein localises to the cytoplasm. It catalyses the reaction acetate + ATP = acetyl phosphate + ADP. It functions in the pathway metabolic intermediate biosynthesis; acetyl-CoA biosynthesis; acetyl-CoA from acetate: step 1/2. Catalyzes the formation of acetyl phosphate from acetate and ATP. Can also catalyze the reverse reaction. The chain is Acetate kinase from Bacillus velezensis (strain DSM 23117 / BGSC 10A6 / LMG 26770 / FZB42) (Bacillus amyloliquefaciens subsp. plantarum).